A 393-amino-acid chain; its full sequence is uncharacterized protein (393 aa).

Residues 2–266 (AMIGLVGKPN…AEKAGIIKRK (265 aa)) form the OBG-type G domain. GTP contacts are provided by residues 8–15 (GKPNVGKS) and 78–82 (DVAGL). The region spanning 314–390 (DMIVVYPVED…KHNDIIKIVS (77 aa)) is the TGS domain.

It belongs to the TRAFAC class OBG-HflX-like GTPase superfamily. OBG GTPase family.

This is an uncharacterized protein from Methanocaldococcus jannaschii (strain ATCC 43067 / DSM 2661 / JAL-1 / JCM 10045 / NBRC 100440) (Methanococcus jannaschii).